The primary structure comprises 25 residues: Kappa-conotoxin RIIIJ (25 aa).

Residues P2, P3, P7, P8, P13, P15, and P21 each carry the 4-hydroxyproline modification. 3 disulfide bridges follow: C4-C17, C5-C22, and C12-C23.

Belongs to the conotoxin M superfamily. In terms of tissue distribution, expressed by the venom duct.

It is found in the secreted. Its function is as follows. Kappa-conotoxins inhibits voltage-gated potassium channels. This toxin dose-dependently and reversibly inhibits the Kv1.2/KCNA2 channel in mammalia. Does not exert protective effect on cardiac tissue when administered after an ischemic event. The sequence is that of Kappa-conotoxin RIIIJ from Conus radiatus (Rayed cone).